The chain runs to 456 residues: Enolase (456 aa).

Q164 lines the (2R)-2-phosphoglycerate pocket. E207 serves as the catalytic Proton donor. Residues D244, E287, and D314 each contribute to the Mg(2+) site. 4 residues coordinate (2R)-2-phosphoglycerate: K339, R368, S369, and K390. The active-site Proton acceptor is K339.

Belongs to the enolase family. In terms of assembly, component of the RNA degradosome, a multiprotein complex involved in RNA processing and mRNA degradation. The cofactor is Mg(2+).

It is found in the cytoplasm. It localises to the secreted. The protein resides in the cell surface. It carries out the reaction (2R)-2-phosphoglycerate = phosphoenolpyruvate + H2O. Its pathway is carbohydrate degradation; glycolysis; pyruvate from D-glyceraldehyde 3-phosphate: step 4/5. Functionally, catalyzes the reversible conversion of 2-phosphoglycerate (2-PG) into phosphoenolpyruvate (PEP). It is essential for the degradation of carbohydrates via glycolysis. The protein is Enolase of Francisella tularensis subsp. tularensis (strain FSC 198).